The following is a 312-amino-acid chain: Taste receptor type 2 member 7 (312 aa).

Over 1 to 9 (MTYETDTTL) the chain is Extracellular. Residues 10-30 (MFVAVCEALVGILGNAFIALV) traverse the membrane as a helical segment. Over 31–49 (NFMGWMKNRKITAIDLILS) the chain is Cytoplasmic. The chain crosses the membrane as a helical span at residues 50–70 (SLAMSRICLQCIILLDCIILV). At 71–101 (QYPDTYNRGKEMRIIDFFWTLTNHLSVWFAT) the chain is on the extracellular side. The helical transmembrane segment at 102–122 (CLSIFYFFKIANFFHPLFLWI) threads the bilayer. Residues 123 to 128 (KWRIDK) are Cytoplasmic-facing. The helical transmembrane segment at 129–149 (LILRTLLACLILSLCFSLPVT) threads the bilayer. The Extracellular segment spans residues 150–187 (ENLTDDFRRCVKTKERINSTLRCKLNKAGYASVKVNLN). 2 N-linked (GlcNAc...) asparagine glycosylation sites follow: N151 and N167. The chain crosses the membrane as a helical span at residues 188 to 208 (LVMLFPFSVSLVSFLLLILSL). Residues 209-235 (WRHTRQMQLNVTGYNDPSTTAHVKATK) are Cytoplasmic-facing. Residues 236–256 (AVISFLVLFIVYCLAFLIATS) traverse the membrane as a helical segment. At 257–266 (SYFMPESELA) the chain is on the extracellular side. A helical membrane pass occupies residues 267–287 (VIWGELIALIYPSSHSFILIL). Residues 288 to 312 (GNSKLKQASVRVLCRVKTMLKGRKY) are Cytoplasmic-facing.

It belongs to the G-protein coupled receptor T2R family. As to expression, expressed in subsets of taste receptor cells of the tongue and palate epithelium and exclusively in gustducin-positive cells. Expressed in 15% taste bud cells in circumvallate and foliate papillae but only in 2% in fungiform papillae. Expressed in the duodenum, antrum and fundus (part of the stomach) and in gastric endocrine cells.

Its subcellular location is the membrane. Its function is as follows. Gustducin-coupled receptor implicated in the perception of bitter compounds in the oral cavity and the gastrointestinal tract. Signals through PLCB2 and the calcium-regulated cation channel TRPM5. The protein is Taste receptor type 2 member 7 (Tas2r7) of Rattus norvegicus (Rat).